The primary structure comprises 122 residues: Large ribosomal subunit protein uL14 (122 aa).

It belongs to the universal ribosomal protein uL14 family. In terms of assembly, part of the 50S ribosomal subunit. Forms a cluster with proteins L3 and L19. In the 70S ribosome, L14 and L19 interact and together make contacts with the 16S rRNA in bridges B5 and B8.

Binds to 23S rRNA. Forms part of two intersubunit bridges in the 70S ribosome. The protein is Large ribosomal subunit protein uL14 of Borrelia turicatae (strain 91E135).